Consider the following 286-residue polypeptide: Protein GrpE (286 aa).

Disordered regions lie at residues 1-51 (MSED…ETTA) and 260-286 (VAAPKEPDSSETESTSESVSDVQQPTT). 2 stretches are compositionally biased toward low complexity: residues 39–50 (QPSSTPQTPETT) and 271–286 (TESTSESVSDVQQPTT).

This sequence belongs to the GrpE family. In terms of assembly, homodimer.

It localises to the cytoplasm. Functionally, participates actively in the response to hyperosmotic and heat shock by preventing the aggregation of stress-denatured proteins, in association with DnaK and GrpE. It is the nucleotide exchange factor for DnaK and may function as a thermosensor. Unfolded proteins bind initially to DnaJ; upon interaction with the DnaJ-bound protein, DnaK hydrolyzes its bound ATP, resulting in the formation of a stable complex. GrpE releases ADP from DnaK; ATP binding to DnaK triggers the release of the substrate protein, thus completing the reaction cycle. Several rounds of ATP-dependent interactions between DnaJ, DnaK and GrpE are required for fully efficient folding. The sequence is that of Protein GrpE from Gloeothece citriformis (strain PCC 7424) (Cyanothece sp. (strain PCC 7424)).